A 434-amino-acid polypeptide reads, in one-letter code: Serine protease HTRA2, mitochondrial (434 aa).

The segment at 34-65 (YSNNTANITTDSSSSSNNNSNRNNKNDNNNED) is disordered. The span at 35 to 60 (SNNTANITTDSSSSSNNNSNRNNKND) shows a compositional bias: low complexity. A helical membrane pass occupies residues 74–92 (LVRFFVPFSLGAVASSLVM). An IAP-binding motif is present at residues 85–88 (AVAS). The tract at residues 151 to 314 (SNGSGFVIEQ…IPIDYVKVFL (164 aa)) is serine protease. Catalysis depends on charge relay system residues His-169, Asp-201, and Ser-278. Residues 337-424 (MGITMLTLTP…NMIIMRGVKQ (88 aa)) enclose the PDZ domain.

The protein belongs to the peptidase S1C family. In terms of assembly, interacts with th/DIAP1 (via BIR 2 domain).

The protein localises to the mitochondrion intermembrane space. Its subcellular location is the mitochondrion membrane. It carries out the reaction Cleavage of non-polar aliphatic amino-acids at the P1 position, with a preference for Val, Ile and Met. At the P2 and P3 positions, Arg is selected most strongly with a secondary preference for other hydrophilic residues.. Its function is as follows. Serine protease that shows proteolytic activity against a non-specific substrate beta-casein. Promotes or induces cell death either by direct binding to and inhibition of BIRC proteins (also called inhibitor of apoptosis proteins, IAPs), leading to an increase in caspase activity, or by a BIRC inhibition-independent, caspase-independent and serine protease activity-dependent mechanism. Can antagonize antiapoptotic activity of th/Diap1 by directly inducing the degradation of th/Diap1. This is Serine protease HTRA2, mitochondrial from Drosophila willistoni (Fruit fly).